A 260-amino-acid polypeptide reads, in one-letter code: PsbP domain-containing protein 4, chloroplastic (260 aa).

It belongs to the PsbP family.

Its subcellular location is the plastid. The protein localises to the chloroplast thylakoid lumen. The sequence is that of PsbP domain-containing protein 4, chloroplastic (PPD4) from Arabidopsis thaliana (Mouse-ear cress).